We begin with the raw amino-acid sequence, 948 residues long: Sensor histidine kinase RcsC (948 aa).

Topologically, residues 1–20 (MKYLASFRTTLKVSRYLFRA) are cytoplasmic. A helical transmembrane segment spans residues 21-41 (LALLIWLLIAFVSVFYIVNAL). Residues 42 to 313 (HQRESEIRQE…PVDLVLERIR (272 aa)) are Periplasmic-facing. The helical transmembrane segment at 314-334 (ILILNAILLNVLVGAGLFTLA) threads the bilayer. Topologically, residues 335–948 (RMYERRIFIP…YAERVRKTRA (614 aa)) are cytoplasmic. Residues 357–425 (QFNRKIVASA…VLTSNNTNLQ (69 aa)) form the PAS domain. A Histidine kinase domain is found at 476-692 (TVSHELRTPL…QFTLRIPLYG (217 aa)). His-479 bears the Phosphohistidine; by autocatalysis mark. Positions 705 to 805 (AGTCCWLAVR…ARIYSIELDS (101 aa)) constitute an ABL domain. One can recognise a Response regulatory domain in the interval 826–940 (MILVVDDHPI…ALKQTLAVYA (115 aa)). The residue at position 875 (Asp-875) is a 4-aspartylphosphate.

The protein belongs to the RcsC family. In terms of assembly, interacts with RcsD. Post-translationally, autophosphorylated. Activation probably requires a transfer of a phosphate group from a His in the transmitter domain to an Asp in the receiver domain.

Its subcellular location is the cell inner membrane. The enzyme catalyses ATP + protein L-histidine = ADP + protein N-phospho-L-histidine.. In terms of biological role, component of the Rcs signaling system, which controls transcription of numerous genes. RcsC functions as a membrane-associated protein kinase that phosphorylates RcsD in response to environmental signals. The phosphoryl group is then transferred to the response regulator RcsB. The sequence is that of Sensor histidine kinase RcsC from Salmonella typhi.